A 171-amino-acid chain; its full sequence is Crossover junction endodeoxyribonuclease RuvC (171 aa).

Catalysis depends on residues Asp-7, Glu-66, and Asp-138. Mg(2+) is bound by residues Asp-7, Glu-66, and Asp-138.

Belongs to the RuvC family. Homodimer which binds Holliday junction (HJ) DNA. The HJ becomes 2-fold symmetrical on binding to RuvC with unstacked arms; it has a different conformation from HJ DNA in complex with RuvA. In the full resolvosome a probable DNA-RuvA(4)-RuvB(12)-RuvC(2) complex forms which resolves the HJ. It depends on Mg(2+) as a cofactor.

It localises to the cytoplasm. It carries out the reaction Endonucleolytic cleavage at a junction such as a reciprocal single-stranded crossover between two homologous DNA duplexes (Holliday junction).. Functionally, the RuvA-RuvB-RuvC complex processes Holliday junction (HJ) DNA during genetic recombination and DNA repair. Endonuclease that resolves HJ intermediates. Cleaves cruciform DNA by making single-stranded nicks across the HJ at symmetrical positions within the homologous arms, yielding a 5'-phosphate and a 3'-hydroxyl group; requires a central core of homology in the junction. The consensus cleavage sequence is 5'-(A/T)TT(C/G)-3'. Cleavage occurs on the 3'-side of the TT dinucleotide at the point of strand exchange. HJ branch migration catalyzed by RuvA-RuvB allows RuvC to scan DNA until it finds its consensus sequence, where it cleaves and resolves the cruciform DNA. The sequence is that of Crossover junction endodeoxyribonuclease RuvC from Francisella tularensis subsp. holarctica (strain FTNF002-00 / FTA).